The chain runs to 464 residues: 3-isopropylmalate dehydratase large subunit (464 aa).

[4Fe-4S] cluster contacts are provided by C337, C397, and C400.

The protein belongs to the aconitase/IPM isomerase family. LeuC type 1 subfamily. In terms of assembly, heterodimer of LeuC and LeuD. [4Fe-4S] cluster serves as cofactor.

The enzyme catalyses (2R,3S)-3-isopropylmalate = (2S)-2-isopropylmalate. It functions in the pathway amino-acid biosynthesis; L-leucine biosynthesis; L-leucine from 3-methyl-2-oxobutanoate: step 2/4. Catalyzes the isomerization between 2-isopropylmalate and 3-isopropylmalate, via the formation of 2-isopropylmaleate. This chain is 3-isopropylmalate dehydratase large subunit, found in Bacillus cereus (strain 03BB102).